We begin with the raw amino-acid sequence, 231 residues long: Caspase-like protein (231 aa).

Belongs to the peptidase C14A family.

The chain is Caspase-like protein from Trichoplusia ni ascovirus 2c (TnAV-2c).